Consider the following 395-residue polypeptide: uncharacterized protein (395 aa).

2 disordered regions span residues 185–282 (RREV…SSTA) and 316–372 (GSST…TCSS). Residues 248-257 (LHLRTRHPHR) are compositionally biased toward basic residues. Low complexity predominate over residues 342–360 (ARASTHSRSSPSASANSRY).

This is an uncharacterized protein from Streptomyces fradiae (Streptomyces roseoflavus).